Reading from the N-terminus, the 406-residue chain is uncharacterized protein (406 aa).

Residues Met-1–Gly-36 form a disordered region.

This sequence to yeast YMR316w.

This is an uncharacterized protein from Saccharomyces cerevisiae (strain ATCC 204508 / S288c) (Baker's yeast).